Reading from the N-terminus, the 91-residue chain is MKLTIAIVLVTLTLFCRPASTEVCPSLLYVLGNLIAGTPSSFEATLEPFSPDEDMKEATSQLKTLVDTLSPKAKDSMLELMMKIIQSPECA.

An N-terminal signal peptide occupies residues 1–21; sequence MKLTIAIVLVTLTLFCRPAST.

Belongs to the secretoglobin family. In terms of assembly, antiparallel homodimer; disulfide-linked. Interaction with LMBR1L is controversial.

The protein resides in the secreted. Its function is as follows. Binds phosphatidylcholine, phosphatidylinositol, polychlorinated biphenyls (PCB) and weakly progesterone, potent inhibitor of phospholipase A2. This Bos taurus (Bovine) protein is Uteroglobin (SCGB1A1).